We begin with the raw amino-acid sequence, 988 residues long: Putative disease resistance protein RGA4 (988 aa).

The region spanning 137–439 is the NB-ARC domain; sequence AAAATRETGF…MAHGFLLSKG (303 aa). 184 to 191 serves as a coordination point for ATP; the sequence is GMGGLGKT. 14 LRR repeats span residues 526–548, 549–572, 574–595, 596–620, 638–662, 674–696, 751–776, 784–808, 829–851, 852–876, 878–900, 901–925, 927–950, and 966–988; these read FVSL…SIGD, LLHL…LCKL, NLQT…QTSK, LSSL…GLLT, LGEL…KNDT, LQSL…EVKV, LPCL…DVHS, FPSL…EGEE, LSSV…SISN, LSTL…MFTS, TNLE…SLTS, LNAL…GLEG, TSLT…LQHL, and KRCD…LDIH.

Belongs to the disease resistance NB-LRR family.

In terms of biological role, disease resistance protein. Resistance proteins guard the plant against pathogens that contain an appropriate avirulence protein via a direct or indirect interaction with this avirulence protein. That triggers a defense system which restricts the pathogen growth. The polypeptide is Putative disease resistance protein RGA4 (RGA4) (Solanum bulbocastanum (Wild potato)).